The following is a 112-amino-acid chain: Putative pterin-4-alpha-carbinolamine dehydratase (112 aa).

This sequence belongs to the pterin-4-alpha-carbinolamine dehydratase family.

It catalyses the reaction (4aS,6R)-4a-hydroxy-L-erythro-5,6,7,8-tetrahydrobiopterin = (6R)-L-erythro-6,7-dihydrobiopterin + H2O. In Hahella chejuensis (strain KCTC 2396), this protein is Putative pterin-4-alpha-carbinolamine dehydratase.